Here is a 179-residue protein sequence, read N- to C-terminus: Large ribosomal subunit protein uL5 (179 aa).

This sequence belongs to the universal ribosomal protein uL5 family. Part of the 50S ribosomal subunit; part of the 5S rRNA/L5/L18/L25 subcomplex. Contacts the 5S rRNA and the P site tRNA. Forms a bridge to the 30S subunit in the 70S ribosome.

This is one of the proteins that bind and probably mediate the attachment of the 5S RNA into the large ribosomal subunit, where it forms part of the central protuberance. In the 70S ribosome it contacts protein S13 of the 30S subunit (bridge B1b), connecting the 2 subunits; this bridge is implicated in subunit movement. Contacts the P site tRNA; the 5S rRNA and some of its associated proteins might help stabilize positioning of ribosome-bound tRNAs. The protein is Large ribosomal subunit protein uL5 of Sodalis glossinidius (strain morsitans).